A 115-amino-acid polypeptide reads, in one-letter code: MNQIIRELEKAQLKQDIPAFRPGDTVRVHVKVIEGQRERIQLFEGVCIRRRGTGISETFTARKISYGVGVERTFPVHTPKIDKIEIVRHGKVRRAKLYYLRDRVGKAARIKEIRR.

The protein belongs to the bacterial ribosomal protein bL19 family.

This protein is located at the 30S-50S ribosomal subunit interface and may play a role in the structure and function of the aminoacyl-tRNA binding site. In Brevibacillus brevis (strain 47 / JCM 6285 / NBRC 100599), this protein is Large ribosomal subunit protein bL19.